We begin with the raw amino-acid sequence, 444 residues long: MFS-type transporter dbaD (444 aa).

The span at 1–13 (MTEQPPQNHSVDL) shows a compositional bias: polar residues. Residues 1–57 (MTEQPPQNHSVDLNQNEDNNENDYRSSSATDAERPCEPKIEESTAKPPTGPPAPPPP) form a disordered region. N-linked (GlcNAc...) asparagine glycosylation occurs at Asn-8. Basic and acidic residues predominate over residues 31 to 44 (DAERPCEPKIEEST). A compositionally biased stretch (pro residues) spans 48-57 (PTGPPAPPPP). The next 11 helical transmembrane spans lie at 62–82 (LVAW…WGIM), 107–127 (WIGS…GSIY), 134–154 (ALLV…SLCK), 159–179 (VLLA…VPCV), 192–212 (TALG…PIVL), 223–243 (WSVR…IAVM), 267–287 (MAFT…LFYI), 301–323 (MAFY…PNAM), 330–350 (FNLI…LLAV), 356–376 (LIVI…LPPL), and 394–414 (MGFG…GAIL). Asn-421 carries N-linked (GlcNAc...) asparagine glycosylation. The helical transmembrane segment at 424 to 444 (GLWVYGGVTSLVAGFIICIAV) threads the bilayer.

This sequence belongs to the major facilitator superfamily. Monocarboxylate porter (TC 2.A.1.13) family.

The protein resides in the cell membrane. Functionally, MFS-type transporter; part of the gene cluster that mediates the biosynthesis of the antibiotic 2,4- dihydroxy-3-methyl-6-(2-oxopropyl)benzaldehyde (DHMBA) and its derivatives. Is probably involved in the transport of the metabolites to the environment. In Emericella nidulans (strain FGSC A4 / ATCC 38163 / CBS 112.46 / NRRL 194 / M139) (Aspergillus nidulans), this protein is MFS-type transporter dbaD.